The following is a 196-amino-acid chain: C-type lectin domain family 2 member F (196 aa).

Positions 1–21 (MNAQCLKKPEEGESSPGTGDK) are disordered. Topologically, residues 1-41 (MNAQCLKKPEEGESSPGTGDKILQRNSLRAISPESSAKLYC) are cytoplasmic. Residues 42–62 (CCGVIMVLTVAVVALSVALPA) form a helical; Signal-anchor for type II membrane protein membrane-spanning segment. At 63–196 (TKTEQILINK…SRSSNYMLQC (134 aa)) the chain is on the extracellular side. An intrachain disulfide couples C77 to C88. Positions 84–187 (VGNKCFYFSE…DYIPRKWICS (104 aa)) constitute a C-type lectin domain. An N-linked (GlcNAc...) asparagine glycan is attached at N97. Cysteines 105 and 186 form a disulfide.

It is found in the cell membrane. Its function is as follows. Lectin-type cell surface receptor. This chain is C-type lectin domain family 2 member F (Clec2f), found in Mus musculus (Mouse).